The sequence spans 824 residues: Ent-copalyl diphosphate synthase AN1, chloroplastic (824 aa).

A chloroplast-targeting transit peptide spans 1–63 (MPYPHPYPWQ…SSAKVFQTSR (63 aa)). The tract at residues 1 to 87 (MPYPHPYPWQ…QDLEDEHQAE (87 aa)) is disordered. The span at 44-63 (ATTTQQPDNVSSAKVFQTSR) shows a compositional bias: polar residues. A substrate-binding site is contributed by Lys247. Positions 379 and 381 each coordinate Mg(2+). The DXDD motif signature appears at 379 to 382 (DVDD). Position 465 (Lys465) interacts with substrate.

Belongs to the terpene synthase family. Tpsc subfamily. Requires Mg(2+) as cofactor.

It localises to the plastid. The protein localises to the chloroplast. It catalyses the reaction (2E,6E,10E)-geranylgeranyl diphosphate = ent-copalyl diphosphate. It participates in plant hormone biosynthesis; gibberellin biosynthesis. In terms of biological role, involved in giberellin biosynthesis. Catalyzes the conversion of geranylgeranyl diphosphate to the gibberellin precursor ent-copalyl diphosphate. This chain is Ent-copalyl diphosphate synthase AN1, chloroplastic, found in Zea mays (Maize).